The following is a 328-amino-acid chain: 5'-AMP-activated protein kinase subunit gamma (328 aa).

CBS domains are found at residues 42–103 (VSYR…PDKF), 123–186 (IQPY…CKEI), 199–259 (ISTN…YNDL), and 268–328 (MRRS…FAES). ADP is bound by residues isoleucine 47, arginine 150, arginine 151, 171 to 174 (TQYR), 227 to 228 (SS), and 297 to 299 (RVH). Arginine 150 lines the AMP pocket. ATP is bound at residue arginine 150. Residue 227 to 228 (SS) participates in AMP binding. 227–228 (SS) lines the ATP pocket. Residues arginine 300 and 313–318 (VLTLSD) contribute to the ATP site. 315–318 (TLSD) contacts ADP. 315-318 (TLSD) provides a ligand contact to AMP.

It belongs to the 5'-AMP-activated protein kinase gamma subunit family. AMPK is a heterotrimer of an alpha catalytic subunit, a beta and a gamma non-catalytic subunits.

It is found in the nucleus. It localises to the cytoplasm. Adenine nucleotides-binding subunit gamma of AMP-activated protein kinase (AMPK), an energy sensor protein kinase that plays a key role in regulating cellular energy metabolism. In response to reduction of intracellular ATP levels, AMPK activates energy-producing pathways and inhibits energy-consuming processes: inhibits protein, carbohydrate and lipid biosynthesis, as well as cell growth and proliferation. AMPK acts via direct phosphorylation of metabolic enzymes, and by longer-term effects via phosphorylation of transcription regulators. Gamma non-catalytic subunit mediates binding to AMP, ADP and ATP, leading to activate or inhibit AMPK: AMP-binding results in allosteric activation of alpha catalytic subunit (SNF1) both by inducing phosphorylation and preventing dephosphorylation of catalytic subunits. The chain is 5'-AMP-activated protein kinase subunit gamma (SNF4) from Kluyveromyces lactis (strain ATCC 8585 / CBS 2359 / DSM 70799 / NBRC 1267 / NRRL Y-1140 / WM37) (Yeast).